Consider the following 148-residue polypeptide: MEGLQRSTISFRRQGSSGIVFDDRLIAELNKSGNNEQKDESQRDEQPKPMSESSEQVKPIDEKDKLRPIKTGGGAPGGIERSRSNGGGAQRHHRTTGRVSPAVDPPSPRISSCGCCSAFGKNPPGKKVNPRKRPPKRRSRRRIVTKKR.

Residues 1–17 (MEGLQRSTISFRRQGSS) are compositionally biased toward polar residues. Residues 1–148 (MEGLQRSTIS…SRRRIVTKKR (148 aa)) are disordered. Composition is skewed to basic and acidic residues over residues 36-47 (EQKDESQRDEQP) and 58-67 (KPIDEKDKLR). A phosphoserine mark is found at Ser100 and Ser107. The segment covering 128 to 148 (VNPRKRPPKRRSRRRIVTKKR) has biased composition (basic residues).

This is an uncharacterized protein from Arabidopsis thaliana (Mouse-ear cress).